The primary structure comprises 389 residues: 26S proteasome non-ATPase regulatory subunit 6 (389 aa).

One can recognise a PCI domain in the interval 193-361 (DFKQAAELFL…EIVETNRPDS (169 aa)).

This sequence belongs to the proteasome subunit S10 family. Component of the 19S proteasome regulatory particle complex. The 26S proteasome consists of a 20S core particle (CP) and two 19S regulatory subunits (RP). The regulatory particle is made of a lid composed of 9 subunits including PSMD6, a base containing 6 ATPases and few additional components.

Functionally, component of the 26S proteasome, a multiprotein complex involved in the ATP-dependent degradation of ubiquitinated proteins. This complex plays a key role in the maintenance of protein homeostasis by removing misfolded or damaged proteins, which could impair cellular functions, and by removing proteins whose functions are no longer required. Therefore, the proteasome participates in numerous cellular processes, including cell cycle progression, apoptosis, or DNA damage repair. The protein is 26S proteasome non-ATPase regulatory subunit 6 (Psmd6) of Mus musculus (Mouse).